The sequence spans 370 residues: Dihydrolipoyllysine-residue acetyltransferase component of acetoin cleaving system (370 aa).

Positions 4–79 constitute a Lipoyl-binding domain; sequence IHTLTMPKWG…PVGALLAVVV (76 aa). Lys45 is subject to N6-lipoyllysine. The region spanning 135–355 is the AB hydrolase-1 domain; the sequence is PLVLVHGFGG…EAGHMVQMEA (221 aa).

Requires (R)-lipoate as cofactor.

The enzyme catalyses N(6)-[(R)-dihydrolipoyl]-L-lysyl-[protein] + acetyl-CoA = N(6)-[(R)-S(8)-acetyldihydrolipoyl]-L-lysyl-[protein] + CoA. Its pathway is ketone degradation; acetoin degradation. This is Dihydrolipoyllysine-residue acetyltransferase component of acetoin cleaving system (acoC) from Pseudomonas putida (Arthrobacter siderocapsulatus).